The chain runs to 240 residues: MRWKDEGIIIAAKKYGDKNLILSLFTKNHGKRRGLTKLTNNSNYKFQISNLLHAEWSAKLPENLGFLKCELIESPFHHFFQDRLKSITIVSFSSILEKVLPESEPCAMLYDNLRYFIDVIKHNNQSWQSHYLNLELLLLTQLGFKLDLSKCAVTGVKENLQFISPKTGRAVSKKVGDYYADKLLPFPQMLHDVYNNNLQNSYSFQEFQLGLKVTGYFLNKYLFLQLNVKFPELRNLMLSL.

Belongs to the RecO family.

Involved in DNA repair and RecF pathway recombination. The polypeptide is DNA repair protein RecO (Wolbachia pipientis wMel).